The primary structure comprises 206 residues: Pyridoxine/pyridoxamine 5'-phosphate oxidase (206 aa).

FMN is bound by residues 53–58, 68–69, Lys75, and Gln97; these read RMVLLK and YT. Lys58 is a substrate binding site. Residues Tyr115, Arg119, and Ser123 each coordinate substrate. Residues 132-133 and Trp177 contribute to the FMN site; that span reads QS. 183–185 serves as a coordination point for substrate; it reads RLH. Residue Arg187 coordinates FMN.

This sequence belongs to the pyridoxamine 5'-phosphate oxidase family. Homodimer. FMN is required as a cofactor.

The catalysed reaction is pyridoxamine 5'-phosphate + O2 + H2O = pyridoxal 5'-phosphate + H2O2 + NH4(+). It carries out the reaction pyridoxine 5'-phosphate + O2 = pyridoxal 5'-phosphate + H2O2. It functions in the pathway cofactor metabolism; pyridoxal 5'-phosphate salvage; pyridoxal 5'-phosphate from pyridoxamine 5'-phosphate: step 1/1. Its pathway is cofactor metabolism; pyridoxal 5'-phosphate salvage; pyridoxal 5'-phosphate from pyridoxine 5'-phosphate: step 1/1. Functionally, catalyzes the oxidation of either pyridoxine 5'-phosphate (PNP) or pyridoxamine 5'-phosphate (PMP) into pyridoxal 5'-phosphate (PLP). This is Pyridoxine/pyridoxamine 5'-phosphate oxidase from Rhizobium etli (strain CIAT 652).